The primary structure comprises 49 residues: Large ribosomal subunit protein bL33B (49 aa).

The protein belongs to the bacterial ribosomal protein bL33 family.

The chain is Large ribosomal subunit protein bL33B from Staphylococcus saprophyticus subsp. saprophyticus (strain ATCC 15305 / DSM 20229 / NCIMB 8711 / NCTC 7292 / S-41).